Here is a 187-residue protein sequence, read N- to C-terminus: Dihydrofolate reductase (187 aa).

A DHFR domain is found at 4–185 (PLNCIVAVSQ…IKYKFEVYEK (182 aa)). NADP(+) is bound by residues Ala-10 and 16–22 (GIGKNGD). 31–36 (EFKYFQ) lines the substrate pocket. Lys-33 is modified (N6-acetyllysine; alternate). An N6-succinyllysine; alternate modification is found at Lys-33. 55–57 (RKT) lines the NADP(+) pocket. Positions 65 and 71 each coordinate substrate. NADP(+)-binding positions include 77-79 (SRE) and 117-124 (GGSSVYQE).

This sequence belongs to the dihydrofolate reductase family. Homodimer.

It is found in the mitochondrion. The protein resides in the cytoplasm. It carries out the reaction (6S)-5,6,7,8-tetrahydrofolate + NADP(+) = 7,8-dihydrofolate + NADPH + H(+). It participates in cofactor biosynthesis; tetrahydrofolate biosynthesis; 5,6,7,8-tetrahydrofolate from 7,8-dihydrofolate: step 1/1. Its function is as follows. Key enzyme in folate metabolism. Contributes to the de novo mitochondrial thymidylate biosynthesis pathway. Catalyzes an essential reaction for de novo glycine and purine synthesis, and for DNA precursor synthesis. Binds its own mRNA. The polypeptide is Dihydrofolate reductase (Dhfr) (Mus musculus (Mouse)).